The primary structure comprises 451 residues: NADH-quinone oxidoreductase subunit D (451 aa).

It belongs to the complex I 49 kDa subunit family. NDH-1 is composed of 14 different subunits. Subunits NuoB, C, D, E, F, and G constitute the peripheral sector of the complex.

It is found in the cell membrane. The enzyme catalyses a quinone + NADH + 5 H(+)(in) = a quinol + NAD(+) + 4 H(+)(out). NDH-1 shuttles electrons from NADH, via FMN and iron-sulfur (Fe-S) centers, to quinones in the respiratory chain. The immediate electron acceptor for the enzyme in this species is believed to be a menaquinone. Couples the redox reaction to proton translocation (for every two electrons transferred, four hydrogen ions are translocated across the cytoplasmic membrane), and thus conserves the redox energy in a proton gradient. The chain is NADH-quinone oxidoreductase subunit D from Mycolicibacterium gilvum (strain PYR-GCK) (Mycobacterium gilvum (strain PYR-GCK)).